The primary structure comprises 462 residues: Steroidogenic factor 1 (462 aa).

Positions 10–85 (DELCPVCGDK…VGMRLEAVRA (76 aa)) form a DNA-binding region, nuclear receptor. The NR C4-type zinc-finger motif lies at 13–33 (CPVCGDKVSGYHYGLLTCESC). 3 positions are modified to N6-acetyllysine: lysine 34, lysine 38, and lysine 72. An NR C4-type zinc finger spans residues 49 to 73 (CTESQSCKIDKTQRKRCPFCRFQKC). Positions 117–149 (GFKLETGPPMGVPPPPPPPPDYMLPPSLHAPEP) are disordered. Lysine 119 is covalently cross-linked (Glycyl lysine isopeptide (Lys-Gly) (interchain with G-Cter in SUMO)). The span at 126-139 (MGVPPPPPPPPDYM) shows a compositional bias: pro residues. A Glycyl lysine isopeptide (Lys-Gly) (interchain with G-Cter in SUMO) cross-link involves residue lysine 194. Serine 203 is subject to Phosphoserine; by CDK7. An NR LBD domain is found at 223-460 (NVPELILQLL…NLLIEMLQAK (238 aa)). Positions 342, 437, and 441 each coordinate a 1,2-diacyl-sn-glycero-3-phosphocholine.

This sequence belongs to the nuclear hormone receptor family. NR5 subfamily. In terms of assembly, binds DNA as a monomer. Part of a complex consisting of SFPQ, NONO and NR5A1. Interacts with NR0B2, NCOA2 and PPARGC1A. Interacts with DGKQ and CDK7. Binds to and activated by HIPK3. Acetylation stimulates the transcriptional activity. Post-translationally, sumoylation reduces CDK7-mediated phosphorylation on Ser-203. In terms of processing, phosphorylated on Ser-203 by CDK7. This phosphorylation promotes transcriptional activity.

It localises to the nucleus. In terms of biological role, transcriptional activator. Seems to be essential for sexual differentiation and formation of the primary steroidogenic tissues. Binds to the Ad4 site found in the promoter region of steroidogenic P450 genes such as CYP11A, CYP11B and CYP21B. Also regulates the AMH/Muellerian inhibiting substance gene as well as the AHCH and STAR genes. 5'-YCAAGGYC-3' and 5'-RRAGGTCA-3' are the consensus sequences for the recognition by NR5A1. The SFPQ-NONO-NR5A1 complex binds to the CYP17 promoter and regulates basal and cAMP-dependent transcriptional activity. Binds phosphatidylcholine and phospholipids with a phosphatidylinositol (PI) headgroup, in particular PI(3,4)P2 and PI(3,4,5)P3. Activated by the phosphorylation of NR5A1 by HIPK3 leading to increased steroidogenic gene expression upon cAMP signaling pathway stimulation. This chain is Steroidogenic factor 1 (Nr5a1), found in Rattus norvegicus (Rat).